A 224-amino-acid chain; its full sequence is Envelope glycoprotein L (224 aa).

The N-terminal stretch at 1–22 (MGILGWVGLIAVGVLCVRGGLS) is a signal peptide. The interval 20–161 (GLSSTEYVIR…FDYSRTRRCV (142 aa)) is interaction with gH. Residues 20-161 (GLSSTEYVIR…FDYSRTRRCV (142 aa)) form an interaction with gL region. A gL alphaherpesvirus-type domain is found at 23–201 (STEYVIRSRV…LTTPPPIIAT (179 aa)). 2 disulfides stabilise this stretch: cysteine 44-cysteine 76 and cysteine 149-cysteine 160. The tract at residues 161-224 (VGRQDLGPTN…RRRRPHSRRL (64 aa)) is disordered. N-linked (GlcNAc...) asparagine; by host glycosylation occurs at asparagine 170. Over residues 213-224 (KSRRRRPHSRRL) the composition is skewed to basic residues.

It belongs to the herpesviridae glycoprotein L (gL) family. Alphaherpesvirinae gL subfamily. As to quaternary structure, interacts with glycoprotein H (gH); this interaction is necessary for the correct processing and cell surface expression of gH. The heterodimer gH/gL seems to interact with gB trimers during fusion. N-glycosylated, O-glycosylated, and sialylated.

It localises to the virion membrane. The protein resides in the host cell membrane. Its subcellular location is the host Golgi apparatus. The protein localises to the host trans-Golgi network. In terms of biological role, the heterodimer glycoprotein H-glycoprotein L is required for the fusion of viral and plasma membranes leading to virus entry into the host cell. Acts as a functional inhibitor of gH and maintains gH in an inhibited form. Upon binding to host integrins, gL dissociates from gH leading to activation of the viral fusion glycoproteins gB and gH. This chain is Envelope glycoprotein L, found in Human herpesvirus 1 (strain KOS) (HHV-1).